A 788-amino-acid polypeptide reads, in one-letter code: Structure-specific endonuclease subunit SLX4 (788 aa).

Disordered regions lie at residues leucine 59–arginine 86, lysine 562–serine 584, and aspartate 599–proline 622. The span at lysine 562–arginine 573 shows a compositional bias: basic and acidic residues. A compositionally biased stretch (polar residues) spans aspartate 612 to proline 622.

The protein belongs to the SLX4 family. Forms a heterodimer with SLX1. In terms of processing, phosphorylated in response to DNA damage.

Its subcellular location is the nucleus. Its function is as follows. Regulatory subunit of the SLX1-SLX4 structure-specific endonuclease that resolves DNA secondary structures generated during DNA repair and recombination. Has endonuclease activity towards branched DNA substrates, introducing single-strand cuts in duplex DNA close to junctions with ss-DNA. This chain is Structure-specific endonuclease subunit SLX4, found in Debaryomyces hansenii (strain ATCC 36239 / CBS 767 / BCRC 21394 / JCM 1990 / NBRC 0083 / IGC 2968) (Yeast).